Here is a 175-residue protein sequence, read N- to C-terminus: Cytochrome c-550-like protein (175 aa).

A signal peptide spans 1–34; that stretch reads MYQPHFWQRSIGWLCGGLLILLLGWTIAPATALA. Residues Cys-81, Cys-84, His-85, and Cys-135 each coordinate heme c.

This sequence belongs to the cytochrome c family. PsbV subfamily. Requires heme c as cofactor.

It is found in the cellular thylakoid membrane. Its function is as follows. Probable low-potential cytochrome c, can partially replace cytochrome c-550 (PsbV) function. This is Cytochrome c-550-like protein from Thermosynechococcus vestitus (strain NIES-2133 / IAM M-273 / BP-1).